A 397-amino-acid polypeptide reads, in one-letter code: Growth-regulating factor 1 (397 aa).

The region spanning 18–53 (PFTASQWQELEHQALIYKYMASGTPIPSDLILPLRR) is the QLQ domain. 2 consecutive short sequence motifs (bipartite nuclear localization signal) follow at residues 86–105 (RKAEDPEPGRCRRTDGKKWR) and 123–130 (RGKNRSRK). The 45-residue stretch at 90 to 134 (DPEPGRCRRTDGKKWRCSKEAYPDSKYCEKHMHRGKNRSRKPVEM) folds into the WRC domain. The tract at residues 117–176 (CEKHMHRGKNRSRKPVEMSLATPPPPSSSATSAASNTSAGVAPTTTTTSSPAPSYSRPAP) is disordered. The span at 120–129 (HMHRGKNRSR) shows a compositional bias: basic residues. Low complexity predominate over residues 144-174 (SSATSAASNTSAGVAPTTTTTSSPAPSYSRP).

It belongs to the GRF family.

It is found in the nucleus. In terms of biological role, transcription activator that plays a regulatory role in gibberellin-induced stem elongation. In Oryza sativa subsp. japonica (Rice), this protein is Growth-regulating factor 1 (GRF1).